Here is a 664-residue protein sequence, read N- to C-terminus: Macoilin (664 aa).

The next 4 membrane-spanning stretches (helical) occupy residues 28 to 48 (TFLY…DFVL), 75 to 95 (AFSV…LLFI), 120 to 140 (VCLP…AIRF), and 154 to 174 (FAAH…KSYV). The segment covering 253–265 (REKGKEKDKDAKK) has biased composition (basic and acidic residues). A disordered region spans residues 253-274 (REKGKEKDKDAKKHNLGINNNN). At Ser305 the chain carries Phosphoserine. Residues 320 to 348 (KNYKNASGVVNSSPRSHSATNGSIPSSSS) are compositionally biased toward polar residues. Positions 320–367 (KNYKNASGVVNSSPRSHSATNGSIPSSSSKNEKKQKCTSKSPSAHKDL) are disordered. Residue Asn324 is glycosylated (N-linked (GlcNAc...) asparagine). Residue Ser332 is modified to Phosphoserine. 2 N-linked (GlcNAc...) asparagine glycosylation sites follow: Asn340 and Asn452. A phosphoserine mark is found at Ser631 and Ser634. Residues 631 to 664 (SPLSPVSPHYSSKFVETSPSGLDPNASVYQPLKK) form a disordered region. N-linked (GlcNAc...) asparagine glycosylation is present at Asn655.

It belongs to the macoilin family.

It localises to the rough endoplasmic reticulum membrane. Its subcellular location is the nucleus membrane. In terms of biological role, plays a role in the regulation of neuronal activity. In Bos taurus (Bovine), this protein is Macoilin (MACO1).